Here is a 267-residue protein sequence, read N- to C-terminus: NAD kinase (267 aa).

The active-site Proton acceptor is the aspartate 45. Residues 45 to 46, 121 to 122, lysine 147, aspartate 149, 160 to 165, and alanine 184 each bind NAD(+); these read DG, NE, and TAYSKS.

It belongs to the NAD kinase family. A divalent metal cation serves as cofactor.

Its subcellular location is the cytoplasm. It carries out the reaction NAD(+) + ATP = ADP + NADP(+) + H(+). Its function is as follows. Involved in the regulation of the intracellular balance of NAD and NADP, and is a key enzyme in the biosynthesis of NADP. Catalyzes specifically the phosphorylation on 2'-hydroxyl of the adenosine moiety of NAD to yield NADP. The polypeptide is NAD kinase (Lactobacillus gasseri (strain ATCC 33323 / DSM 20243 / BCRC 14619 / CIP 102991 / JCM 1131 / KCTC 3163 / NCIMB 11718 / NCTC 13722 / AM63)).